Reading from the N-terminus, the 228-residue chain is MWPPNAENNHCNYSYHEHAELNPHDHYHHHHYPHSSVHHTECYQTLSCPSDLPVETSYYNSVPPSYQDLGQTDLSPQFWCAEVDCVHERCSTKEIPHEQSKIFEEISKECDHIMNSAGDCEKCQVEHENGAQEAIPINDLVDIVMQTVDNLKKEGSSNDETKLLSRKRQQNKVAAARYRDKQKAKWQDLLDQLEAEEDRNQRLKLQAGHLEKEVAEMRQAFLAKLAKK.

The tract at residues 166–202 is basic motif; it reads RKRQQNKVAAARYRDKQKAKWQDLLDQLEAEEDRNQR. One can recognise a bZIP domain in the interval 166-224; it reads RKRQQNKVAAARYRDKQKAKWQDLLDQLEAEEDRNQRLKLQAGHLEKEVAEMRQAFLAK. Residues 203–210 form a leucine-zipper region; sequence LKLQAGHL.

It belongs to the bZIP family. As to quaternary structure, interacts with CCAAT/enhancer-binding protein cebp-2.

It localises to the nucleus. Functionally, transcription factor. Involved in modulating innate immune response pathways, acting to promote resistance against infection by Gram-negative bacterium P.aeruginosa strain PA14. May act as part of a feedback regulatory loop with the pmk-1/p38 MAPK pathway. May also function in concert with CCAAT/enhancer-binding protein cebp-2 to mediate immune responses, independently of the pmk-1/p38 MAPK pathway. This Caenorhabditis elegans protein is Transcription factor zip-11.